The primary structure comprises 404 residues: Deoxyguanosinetriphosphate triphosphohydrolase-like protein (404 aa).

A disordered region spans residues 1 to 33 (MSVGMAAPRAAFSCDPDRSRGRQFAEPPSSNRS). The region spanning 69–217 (RLTHSLEVAQ…AALADDIAYD (149 aa)) is the HD domain.

The protein belongs to the dGTPase family. Type 2 subfamily.

The protein is Deoxyguanosinetriphosphate triphosphohydrolase-like protein of Rhodopseudomonas palustris (strain HaA2).